A 68-amino-acid chain; its full sequence is U1-hexatoxin-Hv1a (68 aa).

Disulfide bonds link cysteine 3-cysteine 14, cysteine 8-cysteine 22, cysteine 13-cysteine 48, cysteine 32-cysteine 56, and cysteine 50-cysteine 63.

It belongs to the MIT-like AcTx family. In terms of tissue distribution, expressed by the venom gland.

The protein localises to the secreted. This chain is U1-hexatoxin-Hv1a, found in Hadronyche versuta (Blue mountains funnel-web spider).